The primary structure comprises 146 residues: Ribonuclease H (146 aa).

The RNase H type-1 domain maps to 1 to 143 (MRKKIIIYTD…CDYLARQAIK (143 aa)). Mg(2+) contacts are provided by Asp-10, Glu-48, Asp-70, and Asp-135.

It belongs to the RNase H family. In terms of assembly, monomer. It depends on Mg(2+) as a cofactor.

Its subcellular location is the cytoplasm. The catalysed reaction is Endonucleolytic cleavage to 5'-phosphomonoester.. In terms of biological role, endonuclease that specifically degrades the RNA of RNA-DNA hybrids. The polypeptide is Ribonuclease H (Prosthecochloris aestuarii (strain DSM 271 / SK 413)).